An 839-amino-acid polypeptide reads, in one-letter code: Molybdenum cofactor sulfurase (839 aa).

Lys237 bears the N6-(pyridoxal phosphate)lysine mark. Cys401 is a catalytic residue. A compositionally biased stretch (polar residues) spans 651 to 662; it reads DQNYSQKQSPSM. Residues 651-678 are disordered; the sequence is DQNYSQKQSPSMPGSFPQAPSSPDPYPT. One can recognise an MOSC domain in the interval 656–834; that stretch reads QKQSPSMPGS…IMVGDAVTPS (179 aa).

Belongs to the class-V pyridoxal-phosphate-dependent aminotransferase family. MOCOS subfamily. Requires pyridoxal 5'-phosphate as cofactor.

The catalysed reaction is Mo-molybdopterin + L-cysteine + AH2 = thio-Mo-molybdopterin + L-alanine + A + H2O. Its pathway is cofactor biosynthesis; molybdopterin biosynthesis. Its function is as follows. Sulfurates the molybdenum cofactor. Sulfation of molybdenum is essential for xanthine dehydrogenase (XDH) and aldehyde oxidase (ADO) enzymes in which molybdenum cofactor is liganded by 1 oxygen and 1 sulfur atom in active form. The chain is Molybdenum cofactor sulfurase from Emericella nidulans (strain FGSC A4 / ATCC 38163 / CBS 112.46 / NRRL 194 / M139) (Aspergillus nidulans).